Consider the following 329-residue polypeptide: Interleukin-12 subunit beta (329 aa).

The N-terminal stretch at 1-22 (MCHQWLVLSWFSLVLLASPLMA) is a signal peptide. The 78-residue stretch at 29-106 (DVYVVELDWY…LSHSHLLLHK (78 aa)) folds into the Ig-like C2-type domain. Residues Cys-50 and Cys-90 are joined by a disulfide bond. 3 N-linked (GlcNAc...) asparagine glycosylation sites follow: Asn-125, Asn-135, and Asn-223. The 92-residue stretch at 238–329 (PPKNLQLKPL…WSEWASVSCS (92 aa)) folds into the Fibronectin type-III domain.

The protein belongs to the IL-12B family. Heterodimer with IL12A; disulfide-linked. The heterodimer is known as interleukin IL-12. Heterodimer with IL23A; disulfide-linked. The heterodimer is known as interleukin IL-23. Also secreted as a monomer. Interacts with NBR1; this interaction promotes IL-12 secretion.

The protein localises to the secreted. Its function is as follows. Cytokine that can act as a growth factor for activated T and NK cells, enhance the lytic activity of NK/lymphokine-activated killer cells, and stimulate the production of IFN-gamma by resting PBMC. Associates with IL23A to form the IL-23 interleukin, a heterodimeric cytokine which functions in innate and adaptive immunity. IL-23 may constitute with IL-17 an acute response to infection in peripheral tissues. IL-23 binds to a heterodimeric receptor complex composed of IL12RB1 and IL23R, activates the Jak-Stat signaling cascade, stimulates memory rather than naive T-cells and promotes production of pro-inflammatory cytokines. IL-23 induces autoimmune inflammation and thus may be responsible for autoimmune inflammatory diseases and may be important for tumorigenesis. The protein is Interleukin-12 subunit beta (IL12B) of Equus caballus (Horse).